We begin with the raw amino-acid sequence, 348 residues long: 3-methyl-2-oxobutanoate dehydrogenase subunit beta (348 aa).

Residues E51, 80 to 82 (LAE), Q104, and 108 to 111 (FSYP) contribute to the thiamine diphosphate site. Substrate is bound by residues 105–108 (FDGF) and H151. H151 (proton acceptor) is an active-site residue.

In terms of assembly, heteromer of E1 alpha (BkdA) and beta (BkdB) subunits. Part of the BCKADH complex, consisting of multiple copies of BkdA/BkdB (E1), BkdC (E2) and Lpd (E3). The cofactor is thiamine diphosphate.

The enzyme catalyses N(6)-[(R)-lipoyl]-L-lysyl-[protein] + 3-methyl-2-oxobutanoate + H(+) = N(6)-[(R)-S(8)-2-methylpropanoyldihydrolipoyl]-L-lysyl-[protein] + CO2. Component of the branched-chain alpha-ketoacid dehydrogenase (BCKADH) complex, that catalyzes the overall conversion of branched-chain alpha-ketoacids to acyl-CoA and CO(2). The polypeptide is 3-methyl-2-oxobutanoate dehydrogenase subunit beta (bkdB) (Mycobacterium tuberculosis (strain CDC 1551 / Oshkosh)).